Reading from the N-terminus, the 189-residue chain is Apolipoprotein D (189 aa).

Positions 1-20 are cleaved as a signal peptide; that stretch reads MGMMLLLLSMLAGLVAEAEG. Gln-21 carries the post-translational modification Pyrrolidone carboxylic acid. 2 disulfides stabilise this stretch: Cys-28-Cys-134 and Cys-61-Cys-185. N-linked (GlcNAc...) asparagine glycans are attached at residues Asn-65 and Asn-98.

Belongs to the calycin superfamily. Lipocalin family. Homodimer.

The protein resides in the secreted. Its function is as follows. APOD occurs in the macromolecular complex with lecithin-transport and binding of bilin. Appears to be able to transport a variety of ligands in a number of different contexts. This Cavia porcellus (Guinea pig) protein is Apolipoprotein D (APOD).